A 39-amino-acid chain; its full sequence is Photosystem II reaction center protein J (39 aa).

Residues 7–27 (IPLWVVAVIAGLGVIAVVGLF) form a helical membrane-spanning segment.

The protein belongs to the PsbJ family. In terms of assembly, PSII is composed of 1 copy each of membrane proteins PsbA, PsbB, PsbC, PsbD, PsbE, PsbF, PsbH, PsbI, PsbJ, PsbK, PsbL, PsbM, PsbT, PsbX, PsbY, PsbZ, Psb30/Ycf12, peripheral proteins PsbO, CyanoQ (PsbQ), PsbU, PsbV and a large number of cofactors. It forms dimeric complexes.

Its subcellular location is the cellular thylakoid membrane. In terms of biological role, one of the components of the core complex of photosystem II (PSII). PSII is a light-driven water:plastoquinone oxidoreductase that uses light energy to abstract electrons from H(2)O, generating O(2) and a proton gradient subsequently used for ATP formation. It consists of a core antenna complex that captures photons, and an electron transfer chain that converts photonic excitation into a charge separation. The protein is Photosystem II reaction center protein J of Gloeothece citriformis (strain PCC 7424) (Cyanothece sp. (strain PCC 7424)).